The primary structure comprises 179 residues: Peptide deformylase (179 aa).

Residues Cys102 and His144 each coordinate Fe cation. The active site involves Glu145. His148 lines the Fe cation pocket.

The protein belongs to the polypeptide deformylase family. Requires Fe(2+) as cofactor.

It carries out the reaction N-terminal N-formyl-L-methionyl-[peptide] + H2O = N-terminal L-methionyl-[peptide] + formate. Removes the formyl group from the N-terminal Met of newly synthesized proteins. Requires at least a dipeptide for an efficient rate of reaction. N-terminal L-methionine is a prerequisite for activity but the enzyme has broad specificity at other positions. The sequence is that of Peptide deformylase from Wolbachia pipientis subsp. Culex pipiens (strain wPip).